We begin with the raw amino-acid sequence, 434 residues long: Tryptamine hydroxycinnamoyltransferase 2 (434 aa).

Residues histidine 154 and aspartate 380 each act as proton acceptor in the active site.

The protein belongs to the plant acyltransferase family.

Functionally, hydroxycinnamoyl transferase that catalyzes the transfer of an acyl from p-coumaryol-CoA to tryptamine, to produce coumaroyl tryptamine. Serotonin and tyramine serve as acyl acceptors in vitro. Can use caffeoyl-CoA, and to a lesser extent feruloyl-CoA, as acyl donors. In Oryza sativa subsp. japonica (Rice), this protein is Tryptamine hydroxycinnamoyltransferase 2.